The primary structure comprises 145 residues: Large ribosomal subunit protein bL17 (145 aa).

This sequence belongs to the bacterial ribosomal protein bL17 family. Part of the 50S ribosomal subunit. Contacts protein L32.

This chain is Large ribosomal subunit protein bL17, found in Orientia tsutsugamushi (strain Ikeda) (Rickettsia tsutsugamushi).